Reading from the N-terminus, the 137-residue chain is MKPIPSYKFRAAEFSTSVSNMISSQCSLCILSMAISTSFFAMPCPRYVDSTASIPIYPLSLTFLCGSILHTMQPMGMLGVPLLLSTAMYVNSGHWFKKYLYTYIEYGSDRSASISFLILANCSSLRMSNGLYTISMS.

Helical transmembrane passes span 26-42 (CSLC…FFAM) and 52-69 (ASIP…GSIL).

It is found in the membrane. This is an uncharacterized protein from Saccharomyces cerevisiae (strain ATCC 204508 / S288c) (Baker's yeast).